Here is a 607-residue protein sequence, read N- to C-terminus: Chaperone protein DnaK (607 aa).

Thr-173 is subject to Phosphothreonine; by autocatalysis. Low complexity predominate over residues 577-588; the sequence is AQAQQGAEGAAS. The interval 577–607 is disordered; the sequence is AQAQQGAEGAASQDDDVVDADFTEVKDDDNK. The segment covering 589–598 has biased composition (acidic residues); sequence QDDDVVDADF.

Belongs to the heat shock protein 70 family.

Acts as a chaperone. This Macrococcus caseolyticus (strain JCSC5402) (Macrococcoides caseolyticum) protein is Chaperone protein DnaK.